The following is a 120-amino-acid chain: Flagellar protein FliT (120 aa).

Residues 1–50 are required for homodimerization; sequence MERHQHLLSEYQQILTLSEQMLMLATVENWDALVDLEMAYLKAVENTANI. The interval 60 to 98 is fliD binding; sequence LQELLRQKLRSILENEIEIKRLLQRRLDKLSELVGQSTR.

It belongs to the FliT family. In terms of assembly, homodimer. Interacts with FliD and FlhC.

The protein resides in the cytoplasm. It is found in the cytosol. Functionally, dual-function protein that regulates the transcription of class 2 flagellar operons and that also acts as an export chaperone for the filament-capping protein FliD. As a transcriptional regulator, acts as an anti-FlhDC factor; it directly binds FlhC, thus inhibiting the binding of the FlhC/FlhD complex to class 2 promoters, resulting in decreased expression of class 2 flagellar operons. As a chaperone, effects FliD transition to the membrane by preventing its premature polymerization, and by directing it to the export apparatus. This chain is Flagellar protein FliT, found in Yersinia pseudotuberculosis serotype IB (strain PB1/+).